We begin with the raw amino-acid sequence, 219 residues long: Large ribosomal subunit protein uL1 (219 aa).

This sequence belongs to the universal ribosomal protein uL1 family. As to quaternary structure, part of the 50S ribosomal subunit.

Functionally, binds directly to 23S rRNA. Probably involved in E site tRNA release. In terms of biological role, protein L1 is also a translational repressor protein, it controls the translation of its operon by binding to its mRNA. The polypeptide is Large ribosomal subunit protein uL1 (Pyrococcus abyssi (strain GE5 / Orsay)).